Consider the following 447-residue polypeptide: Argininosuccinate synthase (447 aa).

Residues 17 to 25 (AFSGGLDTS) and Ala-43 each bind ATP. Tyr-99 is an L-citrulline binding site. Residues Gly-129 and Thr-131 each coordinate ATP. 3 residues coordinate L-aspartate: Thr-131, Asn-135, and Asp-136. Position 135 (Asn-135) interacts with L-citrulline. ATP is bound at residue Asp-136. Residues Arg-139 and Ser-192 each coordinate L-citrulline. Asp-194 is a binding site for ATP. L-citrulline-binding residues include Thr-201, Glu-203, and Glu-280.

Belongs to the argininosuccinate synthase family. Type 2 subfamily. As to quaternary structure, homotetramer.

The protein localises to the cytoplasm. The enzyme catalyses L-citrulline + L-aspartate + ATP = 2-(N(omega)-L-arginino)succinate + AMP + diphosphate + H(+). The protein operates within amino-acid biosynthesis; L-arginine biosynthesis; L-arginine from L-ornithine and carbamoyl phosphate: step 2/3. In Escherichia coli O1:K1 / APEC, this protein is Argininosuccinate synthase.